Consider the following 310-residue polypeptide: MTSIDNRPLPFIYQFTAGAIAGVSELLVMYPLDVVKTRMQLQVTTKGHPAVVAAKAAVDHYTGVMDCLTKIVKKEGFSHLYKGITSPILMEAPKRAIKFSGNDTFQTFYKKIFPTPNGEMTQKIAIYSGASAGAVEAFVVAPFELVKIRLQDVNSQFKTPIEVVKNSVVKGGVLSLFNGLEATIWRHVLWNAGYFGIIFQIRKLLPAAKTSTEKTRNDLIAGAIGGTVGCLLNTPFDVVKSRIQRSSGPLRKYNWSLPSVLLVYREEGFKALYKGFAPKVMRLAPGGGLLLVVFTNVMDFFREVKYGKKQ.

6 helical membrane passes run 9–29 (LPFIYQFTAGAIAGVSELLVM), 78–97 (SHLYKGITSPILMEAPKRAI), 126–146 (IYSGASAGAVEAFVVAPFELV), 179–199 (GLEATIWRHVLWNAGYFGIIF), 219–239 (LIAGAIGGTVGCLLNTPFDVV), and 281–301 (MRLAPGGGLLLVVFTNVMDFF). Solcar repeat units follow at residues 9-108 (LPFI…FQTF), 120-204 (MTQK…IRKL), and 213-300 (EKTR…VMDF).

This sequence belongs to the mitochondrial carrier (TC 2.A.29) family.

Its subcellular location is the mitochondrion inner membrane. Functionally, transports C5-C7 oxodicarboxylates across the inner membranes of mitochondria. Can transport 2-oxoadipate, 2-oxoglutarate, adipate, glutarate, 2-oxopimelate, oxaloacetate, citrate and malate. The main physiological role is probably to supply 2-oxoadipate and 2-oxoglutarate from the mitochondrial matrix to the cytosol where they are used in the biosynthesis of lysine and glutamate, respectively, and in lysine catabolism. The chain is Mitochondrial 2-oxodicarboxylate carrier 1 (ODC1) from Saccharomyces cerevisiae (strain ATCC 204508 / S288c) (Baker's yeast).